Here is a 200-residue protein sequence, read N- to C-terminus: 3-isopropylmalate dehydratase small subunit (200 aa).

This sequence belongs to the LeuD family. LeuD type 1 subfamily. As to quaternary structure, heterodimer of LeuC and LeuD.

The catalysed reaction is (2R,3S)-3-isopropylmalate = (2S)-2-isopropylmalate. It functions in the pathway amino-acid biosynthesis; L-leucine biosynthesis; L-leucine from 3-methyl-2-oxobutanoate: step 2/4. Its function is as follows. Catalyzes the isomerization between 2-isopropylmalate and 3-isopropylmalate, via the formation of 2-isopropylmaleate. The polypeptide is 3-isopropylmalate dehydratase small subunit (Methylobacterium radiotolerans (strain ATCC 27329 / DSM 1819 / JCM 2831 / NBRC 15690 / NCIMB 10815 / 0-1)).